The following is a 1254-amino-acid chain: NPC intracellular cholesterol transporter 1 homolog 1b (1254 aa).

The signal sequence occupies residues 1-16 (MKVIFATIWLIAGAWS). The Extracellular portion of the chain corresponds to 17-272 (QSAEQLGCIW…WKIAGLYGVT (256 aa)). 8 disulfides stabilise this stretch: C24/C81, C62/C116, C82/C120, C104/C241, C107/C161, C178/C186, C231/C246, and C243/C250. 2 N-linked (GlcNAc...) asparagine glycosylation sites follow: N123 and N132. Residues 273–293 (FILALIIACALSFFIFWGAFG) traverse the membrane as a helical segment. At 294 to 325 (KTSAPSVCMPTLFGEFFYHGFRIWGTFCAKHP) the chain is on the cytoplasmic side. The helical transmembrane segment at 326–346 (VIVLALCSWAIAGLSFGIRYM) threads the bilayer. Residues 347–593 (TITTDPVELW…AIVELSEGEV (247 aa)) lie on the Extracellular side of the membrane. N-linked (GlcNAc...) asparagine glycosylation is present at N389. Cysteines 438 and 454 form a disulfide. Residue N479 is glycosylated (N-linked (GlcNAc...) asparagine). C491 and C500 form a disulfide bridge. Positions 592 to 757 (EVSTVVISYV…ITAFVALMAI (166 aa)) constitute an SSD domain. A helical membrane pass occupies residues 594-614 (STVVISYVVMFVYVAIALGHI). The Cytoplasmic segment spans residues 615-625 (RSCRGFLRESR). A helical membrane pass occupies residues 626 to 646 (IMLAIGGIVIVLASVVCSLGF). Topologically, residues 647-657 (WGYLDVTTTML) are extracellular. A helical membrane pass occupies residues 658 to 678 (AIEVIPFLVLAVGVDNIFIMV). Residues 679–736 (HTYQRLDHSKFKTTHEAIGEAIGQVGPSILQTAGSEMACFAIGCISDMPAVKTFAMYA) lie on the Cytoplasmic side of the membrane. A helical transmembrane segment spans residues 737 to 757 (AIAILLDFLLQITAFVALMAI). Over 758 to 815 (DEKRYLDGRLDMLCCVKSGGKKINDEDGDGVDRPKEVGLLETLFKNFYSPFLLSKPVK) the chain is Extracellular. A helical transmembrane segment spans residues 816–836 (VSVLLIFTVITCLSLMVTPSI). Residues 837–857 (EKGLDQEMSMPKNSHVVKYFR) are Cytoplasmic-facing. A helical membrane pass occupies residues 858-878 (YMVDLLAMGAPVYWVLKPGLN). At 879 to 1079 (YSEPLQQNLI…EQYLTIWGDA (201 aa)) the chain is on the extracellular side. Cysteines 889 and 894 form a disulfide. N-linked (GlcNAc...) asparagine glycosylation is found at N896 and N939. Disulfide bonds link C935-C990, C936-C958, and C946-C955. Residues 1080 to 1100 (MFSLGMSLVAIFLVTLLITGL) form a helical membrane-spanning segment. Topologically, residues 1101-1105 (DITST) are cytoplasmic. The helical transmembrane segment at 1106-1126 (FIVLFMVICILINMLGMMWAW) threads the bilayer. At 1127–1132 (SINLNA) the chain is on the extracellular side. Residues 1133–1153 (ISLVNLVVCVGIGVEFVAHIV) form a helical membrane-spanning segment. The Cytoplasmic segment spans residues 1154-1174 (RSFKRAEGTAQERARHSLNVT). The helical transmembrane segment at 1175-1195 (GSSVLSGITLTKFAGIVVLGF) threads the bilayer. The Extracellular segment spans residues 1196 to 1207 (SNSQIFQVFYFR). A helical membrane pass occupies residues 1208-1228 (MYLGIVLIGAAHGLILLPVLL). At 1229-1254 (SLLGPPQKLARSSGAEPTASITITTN) the chain is on the cytoplasmic side.

Belongs to the patched family. Expressed in the midgut.

The protein localises to the cell membrane. The catalysed reaction is cholesterol(in) = cholesterol(out). Functionally, important for cholesterol absorption at the midgut epithelium. Acts only in the early steps of sterol absorption, prior to Npc1a-dependent intracellular sterol trafficking. The chain is NPC intracellular cholesterol transporter 1 homolog 1b from Drosophila melanogaster (Fruit fly).